The following is a 400-amino-acid chain: Large envelope protein (400 aa).

Met1 carries the post-translational modification N-acetylmethionine. Disordered regions lie at residues 1–20 (MGGWSSKPRKGMGTNLSVPN) and 88–115 (VSTIPPPASTNRQSGRQPTPISPPLRDS). The N-myristoyl glycine; by host moiety is linked to residue Gly2. A pre-S1 region spans residues 2–119 (GGWSSKPRKG…PPLRDSHPQA (118 aa)). A pre-S region spans residues 2 to 174 (GGWSSKPRKG…SARTGDPVTN (173 aa)). The Virion surface; in external conformation portion of the chain corresponds to 2-181 (GGWSSKPRKG…VTNMENITSG (180 aa)). At 2-253 (GGWSSKPRKG…PGYRWMCLRR (252 aa)) the chain is on the intravirion; in internal conformation side. Trp4 is a glycosylation site (N-linked (GlcNAc...) asparagine). Over residues 88 to 106 (VSTIPPPASTNRQSGRQPT) the composition is skewed to polar residues. The tract at residues 120–174 (MQWNSTAFHQTLQDPRVRGLYLPAGGSSSGTVNPAPNIASHISSISARTGDPVTN) is pre-S2. Residues 182-202 (FLGPLLVLQAGFFLLTRILTI) traverse the membrane as a helical segment. At 203-253 (PQSLDSWWTSLNFLGGSPVCLGQNSQSPTSNHSPTSCPPICPGYRWMCLRR) the chain is on the intravirion; in external conformation side. Residues 254-274 (FIIFLFILLLCLIFLLVLLDY) traverse the membrane as a helical segment. Residues 275 to 348 (QGMLPVCPLI…WASVRFSWLS (74 aa)) lie on the Virion surface side of the membrane. An N-linked (GlcNAc...) asparagine; by host glycan is attached at Asn320. A helical transmembrane segment spans residues 349-369 (LLVPFVQWFVGLSPTVWLSAI). At 370–375 (WMMWYW) the chain is on the intravirion side. A helical membrane pass occupies residues 376–398 (GPSLYSIVRPFIPLLPIFFCLWV). At 399 to 400 (YI) the chain is on the virion surface side.

Belongs to the orthohepadnavirus major surface antigen family. In its internal form (Li-HBsAg), interacts with the capsid protein and with the isoform S. Interacts with host chaperone CANX. As to quaternary structure, associates with host chaperone CANX through its pre-S2 N glycan; this association may be essential for isoform M proper secretion. In terms of assembly, interacts with isoform L. Interacts with the antigens of satellite virus HDV (HDVAgs); this interaction is required for encapsidation of HDV genomic RNA. Isoform M is N-terminally acetylated by host at a ratio of 90%, and N-glycosylated by host at the pre-S2 region. In terms of processing, myristoylated.

The protein localises to the virion membrane. Its function is as follows. The large envelope protein exists in two topological conformations, one which is termed 'external' or Le-HBsAg and the other 'internal' or Li-HBsAg. In its external conformation the protein attaches the virus to cell receptors and thereby initiating infection. This interaction determines the species specificity and liver tropism. This attachment induces virion internalization predominantly through caveolin-mediated endocytosis. The large envelope protein also assures fusion between virion membrane and endosomal membrane. In its internal conformation the protein plays a role in virion morphogenesis and mediates the contact with the nucleocapsid like a matrix protein. In terms of biological role, the middle envelope protein plays an important role in the budding of the virion. It is involved in the induction of budding in a nucleocapsid independent way. In this process the majority of envelope proteins bud to form subviral lipoprotein particles of 22 nm of diameter that do not contain a nucleocapsid. The protein is Large envelope protein of Homo sapiens (Human).